The sequence spans 167 residues: Protein YfbM (167 aa).

In terms of assembly, monomer.

The chain is Protein YfbM (yfbM) from Escherichia coli (strain K12).